Here is a 155-residue protein sequence, read N- to C-terminus: uncharacterized protein (155 aa).

Disordered regions lie at residues 1 to 22 (MSSQKGNVTRSRPQKHQNTFTF) and 108 to 155 (PFNK…DTQA). Position 2 is an N-acetylserine (S2). S136, S144, and S146 each carry phosphoserine. Residues 136-155 (SDEDLDAESDSEGEDEDTQA) show a composition bias toward acidic residues.

This is an uncharacterized protein from Rattus norvegicus (Rat).